The chain runs to 307 residues: NADH-ubiquinone oxidoreductase chain 2 (307 aa).

A run of 10 helical transmembrane segments spans residues 1–21, 25–45, 58–78, 88–108, 119–139, 144–164, 193–213, 217–237, 250–270, and 287–307; these read MTLQSVLLGAMIILGPILSMT, WIIIWIGLEISLLGFVSYYML, YFLIQSVSSTVMLLNGLYIFV, FIFITMLMLKIGMFPLHFWII, IGIVGLLLKIVPMWILMHMGC, MLNLITMLSVTSMLFGALIGM, LFKYFITYGFSLVILLVFLYL, MSISLSLLSLSGLPPFMLFIG, LWFIVLVFAILSAVISLVYYL, and HYKMAMFLLVNVTFGMLLFLT.

This sequence belongs to the complex I subunit 2 family.

It localises to the mitochondrion inner membrane. It catalyses the reaction a ubiquinone + NADH + 5 H(+)(in) = a ubiquinol + NAD(+) + 4 H(+)(out). In terms of biological role, core subunit of the mitochondrial membrane respiratory chain NADH dehydrogenase (Complex I) that is believed to belong to the minimal assembly required for catalysis. Complex I functions in the transfer of electrons from NADH to the respiratory chain. The immediate electron acceptor for the enzyme is believed to be ubiquinone. This is NADH-ubiquinone oxidoreductase chain 2 (ND2) from Albinaria caerulea (Land snail).